An 86-amino-acid polypeptide reads, in one-letter code: Probable oxaloacetate decarboxylase gamma chain 1 (86 aa).

Residues 11-33 (AATLMVTGMAVVFLFLTLLVYLV) form a helical membrane-spanning segment.

This sequence belongs to the OadG family. Heterotrimer of an alpha, a beta and a gamma subunit. Na(+) is required as a cofactor.

It localises to the cell membrane. It carries out the reaction oxaloacetate + 2 Na(+)(in) + H(+) = pyruvate + 2 Na(+)(out) + CO2. Catalyzes the decarboxylation of oxaloacetate coupled to Na(+) translocation. In Vibrio cholerae serotype O1 (strain ATCC 39315 / El Tor Inaba N16961), this protein is Probable oxaloacetate decarboxylase gamma chain 1 (oadG1).